We begin with the raw amino-acid sequence, 102 residues long: Small ribosomal subunit protein uS14 (102 aa).

Belongs to the universal ribosomal protein uS14 family. As to quaternary structure, part of the 30S ribosomal subunit. Contacts proteins S3 and S10.

Its function is as follows. Binds 16S rRNA, required for the assembly of 30S particles and may also be responsible for determining the conformation of the 16S rRNA at the A site. This is Small ribosomal subunit protein uS14 from Dichelobacter nodosus (strain VCS1703A).